The chain runs to 347 residues: Olfactory receptor 1L6 (347 aa).

Residues 1-62 (MSYFYRLKLM…GLSSNPQLQK (62 aa)) lie on the Extracellular side of the membrane. N-linked (GlcNAc...) asparagine glycosylation occurs at asparagine 41. A helical membrane pass occupies residues 63–86 (PLFAIFLIMYLLAAVGNVLIIPAI). Over 87 to 94 (YSDPRLHT) the chain is Cytoplasmic. A helical transmembrane segment spans residues 95–116 (PMYFFLSNLSFMDICFTTVIVP). Over 117 to 137 (KMLVNFLSETKVISYVGCLAQ) the chain is Extracellular. Cysteine 134 and cysteine 226 are joined by a disulfide. The helical transmembrane segment at 138 to 157 (MYFFMAFGNTDSYLLASMAI) threads the bilayer. Residues 158-176 (DRLVAICNPLHYDVVMKPR) are Cytoplasmic-facing. A helical membrane pass occupies residues 177–195 (HCLLMLLGSCSISHLHSLF). Residues 196–233 (RVLLMSRLSFCASHIIKHFFCDTQPVLKLSCSDTSSSQ) are Extracellular-facing. A helical transmembrane segment spans residues 234-256 (MVVMTETLAVIVTPFLCIIFSYL). Residues 257–273 (RIMVTVLRIPSAAGKWK) are Cytoplasmic-facing. Residues 274–296 (AFSTCGSHLTAVALFYGSIIYVY) traverse the membrane as a helical segment. Topologically, residues 297 to 309 (FRPLSMYSVVRDR) are extracellular. The chain crosses the membrane as a helical span at residues 310-329 (VATVMYTVVTPMLNPFIYSL). The Cytoplasmic segment spans residues 330-347 (RNKDMKRGLKKLQDRIYR).

Belongs to the G-protein coupled receptor 1 family.

It is found in the cell membrane. Functionally, odorant receptor. The protein is Olfactory receptor 1L6 (OR1L6) of Homo sapiens (Human).